We begin with the raw amino-acid sequence, 113 residues long: RING-box protein 2 (113 aa).

A disordered region spans residues 1-26 (MADVEDGEETCALASHSGSSGSKSGG). An N-acetylalanine modification is found at A2. T10 bears the Phosphothreonine; by CK2 mark. Zn(2+)-binding residues include C50, C53, C61, C64, C73, C80, H82, H85, C87, C88, C99, and C102. The segment at 61–103 (CLRCQAENKQEDCVVVWGECNHSFHNCCMSLWVKQNNRCPLCQ) adopts an RING-type zinc-finger fold.

Belongs to the RING-box family. In terms of assembly, catalytic component of multiple cullin-5-RING E3 ubiquitin-protein ligase complexes (ECS complexes, also named CRL5 complexes) composed of CUL5, Elongin BC (ELOB and ELOC), RNF7/RBX2 and a variable SOCS box domain-containing protein as substrate-specific recognition component. Also interacts (with lower preference) with CUL1, CUL2, CUL3, CUL4A and CUL4B; additional evidence is however required to confirm this result in vivo. Interacts with UBE2F. Interacts with CSNK2B, the interaction is not affected by phosphorylation by CK2. May also interact with DCUN1D1, DCUN1D2, DCUN1D3, DCUN1D4 and DCUN1D5. (Microbial infection) Following infection by HIV-1 virus, component of a cullin-5-RING E3 ubiquitin-protein ligase complex (ECS complex) hijacked by the HIV-1 Vif protein. In terms of processing, phosphorylation at Thr-10 by CK2 promotes its degradation by the proteasome. As to expression, expressed in heart, liver, skeletal muscle and pancreas. At very low levels expressed in brain, placenta and lung.

It is found in the cytoplasm. The protein localises to the nucleus. It carries out the reaction S-ubiquitinyl-[E2 ubiquitin-conjugating enzyme]-L-cysteine + [acceptor protein]-L-lysine = [E2 ubiquitin-conjugating enzyme]-L-cysteine + N(6)-ubiquitinyl-[acceptor protein]-L-lysine.. The enzyme catalyses S-[NEDD8-protein]-yl-[E2 NEDD8-conjugating enzyme]-L-cysteine + [cullin]-L-lysine = [E2 NEDD8-conjugating enzyme]-L-cysteine + N(6)-[NEDD8-protein]-yl-[cullin]-L-lysine.. The protein operates within protein modification; protein ubiquitination. It participates in protein modification; protein neddylation. Catalytic component of multiple cullin-5-RING E3 ubiquitin-protein ligase complexes (ECS complexes), which mediate the ubiquitination and subsequent proteasomal degradation of target proteins. It is thereby involved in various biological processes, such as cell cycle progression, signal transduction and transcription. The functional specificity of the E3 ubiquitin-protein ligase ECS complexes depend on the variable SOCS box-containing substrate recognition component. Within ECS complexes, RNF7/RBX2 recruits the E2 ubiquitination enzyme to the complex via its RING-type and brings it into close proximity to the substrate. Catalytic subunit of various SOCS-containing ECS complexes, such as the ECS(SOCS7) complex, that regulate reelin signaling by mediating ubiquitination and degradation of DAB1. The ECS(SOCS2) complex mediates the ubiquitination and subsequent proteasomal degradation of phosphorylated EPOR and GHR. Promotes ubiquitination and degradation of NF1, thereby regulating Ras protein signal transduction. As part of the ECS(ASB9) complex, catalyzes ubiquitination and degradation of CKB. The ECS(SPSB3) complex catalyzes ubiquitination of nuclear CGAS. As part of the ECS(RAB40C) complex, mediates ANKRD28 ubiquitination and degradation, thereby inhibiting protein phosphatase 6 (PP6) complex activity and focal adhesion assembly during cell migration. As part of some ECS complex, catalyzes 'Lys-11'-linked ubiquitination and degradation of BTRC. ECS complexes and ARIH2 collaborate in tandem to mediate ubiquitination of target proteins; ARIH2 mediating addition of the first ubiquitin on CRLs targets. Specifically catalyzes the neddylation of CUL5 via its interaction with UBE2F. Does not catalyze neddylation of other cullins (CUL1, CUL2, CUL3, CUL4A or CUL4B). May play a role in protecting cells from apoptosis induced by redox agents. In terms of biological role, inactive. Its function is as follows. (Microbial infection) Following infection by HIV-1 virus, catalytic component of a cullin-5-RING E3 ubiquitin-protein ligase complex (ECS complex) hijacked by the HIV-1 Vif protein, which catalyzes ubiquitination and degradation of APOBEC3F and APOBEC3G. The protein is RING-box protein 2 of Homo sapiens (Human).